The following is a 1307-amino-acid chain: Cyclic nucleotide-gated channel beta-1 (1307 aa).

Disordered stretches follow at residues methionine 1 to alanine 101, glutamine 126 to serine 178, leucine 193 to proline 262, aspartate 320 to cysteine 458, leucine 470 to serine 625, and glutamate 648 to glutamate 681. The Cytoplasmic segment spans residues methionine 1–tyrosine 720. Residues valine 43–alanine 59 show a composition bias toward acidic residues. Residues glycine 165–aspartate 174 are compositionally biased toward basic and acidic residues. Residues glutamine 361–arginine 386 show a composition bias toward acidic residues. A compositionally biased stretch (basic and acidic residues) spans glutamate 387–lysine 406. Composition is skewed to acidic residues over residues glutamate 407–proline 451 and leucine 483–glutamate 518. Over residues threonine 550 to serine 560 the composition is skewed to pro residues. The tract at residues alanine 621–arginine 631 is calmodulin-binding CaM1. A helical transmembrane segment spans residues isoleucine 721–tryptophan 742. Residues alanine 743–asparagine 751 lie on the Extracellular side of the membrane. A helical membrane pass occupies residues isoleucine 752–phenylalanine 773. At glutamine 774–aspartate 788 the chain is on the cytoplasmic side. The helical transmembrane segment at lysine 789–cysteine 808 threads the bilayer. The Extracellular portion of the chain corresponds to leucine 809–leucine 824. A helical membrane pass occupies residues leucine 825–phenylalanine 837. Over glutamate 838 to lysine 849 the chain is Cytoplasmic. A helical membrane pass occupies residues alanine 850–leucine 872. Residues alanine 850–alanine 949 are ion conduction pathway. The Extracellular portion of the chain corresponds to tyrosine 873–serine 895. The next 2 helical transmembrane spans lie at tyrosine 896–isoleucine 922 and valine 923–glycine 948. The Cytoplasmic segment spans residues alanine 949–glutamate 1307. The interval alanine 952–glutamine 1028 is C-linker. The interval leucine 1026 to leucine 1130 is cNMP-binding domain. Residues arginine 1032–leucine 1148 form a cyclic nucleotide-binding domain region. 3',5'-cyclic GMP contacts are provided by glycine 1093, glutamate 1094, serine 1096, arginine 1106, and threonine 1107. Arginine 1106 is a 3',5'-cyclic AMP binding site. Residues glutamine 1212 to glutamine 1218 form a calmodulin-binding CaM2 region. Residues glutamine 1214 to alanine 1238 show a composition bias toward low complexity. The interval glutamine 1214 to glutamate 1307 is disordered. Over residues glutamate 1250–serine 1261 the composition is skewed to pro residues.

This sequence belongs to the cyclic nucleotide-gated cation channel (TC 1.A.1.5) family. CNGB1 subfamily. The rod cyclic nucleotide-gated channel is a heterotetramer composed of CNGA1 and CNGB1 subunits with 3:1 stoichiometry. CNGA1:CNGB1 channel binds Ca(2+)-bound CALM1 via CaM1 and CaM2 regions of the CNGB1 subunit; this interaction modulates the affinity of the channel for cNMPs in response to intracellular Ca(2+) levels. As to quaternary structure, the olfactory cyclic nucleotide-gated channel is a heterotetramer composed of CNGA2, CNGA4 and CNGB1b subunits with 2:1:1 stoichiometry. Expressed in olfactory sensory cilia (at protein level).

The protein localises to the cell projection. It is found in the cilium membrane. The catalysed reaction is Ca(2+)(in) = Ca(2+)(out). It catalyses the reaction Na(+)(in) = Na(+)(out). The enzyme catalyses K(+)(in) = K(+)(out). It carries out the reaction NH4(+)(in) = NH4(+)(out). The catalysed reaction is Rb(+)(in) = Rb(+)(out). It catalyses the reaction Li(+)(in) = Li(+)(out). The enzyme catalyses Cs(+)(in) = Cs(+)(out). Pore-forming subunit of the rod cyclic nucleotide-gated channel. Mediates rod photoresponses at dim light converting transient changes in intracellular cGMP levels into electrical signals. In the dark, cGMP levels are high and keep the channel open enabling a steady inward current carried by Na(+) and Ca(2+) ions that leads to membrane depolarization and neurotransmitter release from synaptic terminals. Upon photon absorption cGMP levels decline leading to channel closure and membrane hyperpolarization that ultimately slows neurotransmitter release and signals the presence of light, the end point of the phototransduction cascade. Conducts cGMP- and cAMP-gated ion currents, with permeability for monovalent and divalent cations. The selectivity for Ca(2+) over Na(+) increases with cGMP concentrations, whereas the selectivity among monovalent ions is independent of the cGMP levels. Its function is as follows. Pore-forming subunit of the olfactory cyclic nucleotide-gated channel. Operates in the cilia of olfactory sensory neurons where chemical stimulation of the odorant is converted to an electrical signal. Mediates odorant-induced cAMP-dependent Ca(2+) influx triggering neuron depolarization. The rise of intracellular Ca(2+) levels potentiates the olfactory response by activating Ca(2+)-dependent Cl(-) channels, but it also serves as a negative feedback signal to desensitize the channel for rapid adaptation to odorants. In Rattus norvegicus (Rat), this protein is Cyclic nucleotide-gated channel beta-1.